The chain runs to 82 residues: ATP synthase subunit c (82 aa).

The next 2 membrane-spanning stretches (helical) occupy residues 6 to 26 (AAAS…GPGI) and 57 to 77 (LAFM…LLFA).

It belongs to the ATPase C chain family. F-type ATPases have 2 components, F(1) - the catalytic core - and F(0) - the membrane proton channel. F(1) has five subunits: alpha(3), beta(3), gamma(1), delta(1), epsilon(1). F(0) has four main subunits: a(1), b(1), b'(1) and c(10-14). The alpha and beta chains form an alternating ring which encloses part of the gamma chain. F(1) is attached to F(0) by a central stalk formed by the gamma and epsilon chains, while a peripheral stalk is formed by the delta, b and b' chains.

The protein localises to the cell inner membrane. In terms of biological role, f(1)F(0) ATP synthase produces ATP from ADP in the presence of a proton or sodium gradient. F-type ATPases consist of two structural domains, F(1) containing the extramembraneous catalytic core and F(0) containing the membrane proton channel, linked together by a central stalk and a peripheral stalk. During catalysis, ATP synthesis in the catalytic domain of F(1) is coupled via a rotary mechanism of the central stalk subunits to proton translocation. Key component of the F(0) channel; it plays a direct role in translocation across the membrane. A homomeric c-ring of between 10-14 subunits forms the central stalk rotor element with the F(1) delta and epsilon subunits. The protein is ATP synthase subunit c of Gloeobacter violaceus (strain ATCC 29082 / PCC 7421).